The following is a 579-amino-acid chain: Membrane protein insertase YidC (579 aa).

Residues 10-30 traverse the membrane as a helical segment; the sequence is LVIVTILSALILFGWSFVTKH. The tract at residues 35–61 is disordered; the sequence is PPAPTQQGKNQPKAELTAEESGDKPLK. Helical transmembrane passes span 330 to 350, 351 to 371, 423 to 443, 478 to 498, and 523 to 543; these read FDKA…FYYL, DWLF…VFTI, VNPF…IALY, LLHF…ILGI, and PLIS…YYIF. Over residues 560-572 the composition is skewed to basic and acidic residues; that stretch reads STPEERQDRAERK. The segment at 560–579 is disordered; the sequence is STPEERQDRAERKRPSKKKA.

This sequence belongs to the OXA1/ALB3/YidC family. Type 1 subfamily. Interacts with the Sec translocase complex via SecD. Specifically interacts with transmembrane segments of nascent integral membrane proteins during membrane integration.

Its subcellular location is the cell inner membrane. Functionally, required for the insertion and/or proper folding and/or complex formation of integral membrane proteins into the membrane. Involved in integration of membrane proteins that insert both dependently and independently of the Sec translocase complex, as well as at least some lipoproteins. Aids folding of multispanning membrane proteins. In Zymomonas mobilis subsp. mobilis (strain ATCC 31821 / ZM4 / CP4), this protein is Membrane protein insertase YidC.